The primary structure comprises 466 residues: MVGDTIAAVATPPGEGGIGIVRVSGPGARDVLKAVFRPRYGRGVDDWASHTLHLGTIIHPDDHRVIDEALVAWMVAPRTFTTEDVVEFHCHGGSVPVRETLGAVLRAGARLAEPGEFTRRAFLGGRLDLAQAEAIIEVIRAKTRDGLGAAVSQLEGQLSRRIRKVRDDLLALLAHLEAMIDFPEEDLPDIGSERICTDLMQIQRQIGDMLERSRTGRVLREGWRTVIVGRPNVGKSSLMNALLDEQRAIVTEIPGTTRDAIEEYIDLGGIPLRIVDTAGIRETEDVVERIGVEKTREYLEKADLALVVLDGSDSLTAEDETLLLSLAGRPAVVLVNKSDLAVRRLDEKRLRSLVGEMPIISVSAKEGWGLKELTELIRRMVYGDDGLGYAPDGGRLALVTQARHREALERSYAHLRQALDAVAHGASPDFLTIDLKAAWEALGEITGDTVGEDILDKIFSSFCIGK.

Residues arginine 22, glutamate 87, and arginine 126 each contribute to the (6S)-5-formyl-5,6,7,8-tetrahydrofolate site. The 161-residue stretch at 222-382 (GWRTVIVGRP…LTELIRRMVY (161 aa)) folds into the TrmE-type G domain. Asparagine 232 is a binding site for K(+). GTP is bound by residues 232-237 (NVGKSS), 251-257 (TEIPGTT), and 276-279 (DTAG). Serine 236 contacts Mg(2+). Residues threonine 251, isoleucine 253, and threonine 256 each coordinate K(+). Threonine 257 contributes to the Mg(2+) binding site. Lysine 466 contacts (6S)-5-formyl-5,6,7,8-tetrahydrofolate.

It belongs to the TRAFAC class TrmE-Era-EngA-EngB-Septin-like GTPase superfamily. TrmE GTPase family. As to quaternary structure, homodimer. Heterotetramer of two MnmE and two MnmG subunits. The cofactor is K(+).

The protein localises to the cytoplasm. Its function is as follows. Exhibits a very high intrinsic GTPase hydrolysis rate. Involved in the addition of a carboxymethylaminomethyl (cmnm) group at the wobble position (U34) of certain tRNAs, forming tRNA-cmnm(5)s(2)U34. In Heliobacterium modesticaldum (strain ATCC 51547 / Ice1), this protein is tRNA modification GTPase MnmE.